A 336-amino-acid chain; its full sequence is Atypical chemokine receptor 1 (336 aa).

The Extracellular segment spans residues 1 to 63; the sequence is MGNCLHPAEL…CNLLDDSALP (63 aa). N-linked (GlcNAc...) asparagine glycosylation is found at N16, N27, and N33. 2 disulfides stabilise this stretch: C51-C276 and C129-C195. The helical transmembrane segment at 64-84 threads the bilayer; the sequence is FFILVSVLGILASGIVLFMFF. Over 85 to 95 the chain is Cytoplasmic; that stretch reads RPLFHWQLCPG. Residues 96–116 traverse the membrane as a helical segment; the sequence is WPVLAQLAVGSALFSIVVPIL. Residues 117–129 are Extracellular-facing; sequence APGLGNTRSSALC. The chain crosses the membrane as a helical span at residues 130–153; the sequence is SLGYCVWYGSAFAQALLLGCHASL. Residues 154–166 lie on the Cytoplasmic side of the membrane; the sequence is GPKLGADQVPGLT. Residues 167–187 form a helical membrane-spanning segment; that stretch reads LGLSVGLWGVAALLTLPVTLA. At 188-207 the chain is on the extracellular side; that stretch reads SGASGGLCTPVYSMELKALQ. Residues 208–228 form a helical membrane-spanning segment; sequence ATHAVACLAIFVLLPLGLFGA. The Cytoplasmic portion of the chain corresponds to 229–244; it reads KGLKKALGMGPGPWMN. A helical transmembrane segment spans residues 245 to 265; it reads ILWAWFIFWWPHGVVLGLDFL. Residues 266 to 287 are Extracellular-facing; that stretch reads VRSKLLLLSTCLAQQALDLLLN. Residues 288 to 308 form a helical membrane-spanning segment; that stretch reads LAEALAILHCVATPLLLALFC. Residues 309–336 lie on the Cytoplasmic side of the membrane; the sequence is HQATRTLLPSLPLPEGWSSHLDTLGSKS.

It belongs to the G-protein coupled receptor 1 family. Atypical chemokine receptor subfamily.

It localises to the early endosome. The protein localises to the recycling endosome. The protein resides in the membrane. In terms of biological role, atypical chemokine receptor that controls chemokine levels and localization via high-affinity chemokine binding that is uncoupled from classic ligand-driven signal transduction cascades, resulting instead in chemokine sequestration, degradation, or transcytosis. Also known as interceptor (internalizing receptor) or chemokine-scavenging receptor or chemokine decoy receptor. Has a promiscuous chemokine-binding profile, interacting with inflammatory chemokines of both the CXC and the CC subfamilies but not with homeostatic chemokines. Acts as a receptor for chemokines including CCL2, CCL5, CCL7, CCL11, CCL13, CCL14, CCL17, CXCL5, CXCL6, IL8/CXCL8, CXCL11, GRO, RANTES, MCP-1 and TARC. May regulate chemokine bioavailability and, consequently, leukocyte recruitment through two distinct mechanisms: when expressed in endothelial cells, it sustains the abluminal to luminal transcytosis of tissue-derived chemokines and their subsequent presentation to circulating leukocytes; when expressed in erythrocytes, serves as blood reservoir of cognate chemokines but also as a chemokine sink, buffering potential surges in plasma chemokine levels. This is Atypical chemokine receptor 1 (ACKR1) from Papio hamadryas (Hamadryas baboon).